Consider the following 74-residue polypeptide: Lambda-hexatoxin-Hv1d (74 aa).

The signal sequence occupies residues 1–22 (MNTATCFIVLLVVATVIGGIEA). Residues 23 to 35 (GESDMRKDVMGLF) constitute a propeptide that is removed on maturation. 4 cysteine pairs are disulfide-bonded: cysteine 40-cysteine 54, cysteine 47-cysteine 59, cysteine 50-cysteine 51, and cysteine 53-cysteine 69.

It belongs to the neurotoxin 11 (kappa toxin) family. As to expression, expressed by the venom gland.

Its subcellular location is the secreted. In terms of biological role, this excitatory toxin inhibits insect calcium-activated potassium (KCa) channels (Slo-type). The sequence is that of Lambda-hexatoxin-Hv1d from Hadronyche versuta (Blue mountains funnel-web spider).